Reading from the N-terminus, the 87-residue chain is Diazepam-binding inhibitor-like 5 (87 aa).

An ACB domain is found at 2 to 87 (SQVEFEMACA…VEELKKNETC (86 aa)). An acyl-CoA-binding positions include 29 to 33 (YSFYK), K55, and Y74.

Belongs to the ACBP family. In terms of tissue distribution, testis.

The protein localises to the cytoplasm. In terms of biological role, may be involved in the energy metabolism of the mature sperm. The sequence is that of Diazepam-binding inhibitor-like 5 (Dbil5) from Rattus norvegicus (Rat).